Reading from the N-terminus, the 418-residue chain is UDP-N-acetylglucosamine 1-carboxyvinyltransferase (418 aa).

22-23 serves as a coordination point for phosphoenolpyruvate; sequence KN. Residue Arg-91 participates in UDP-N-acetyl-alpha-D-glucosamine binding. Catalysis depends on Cys-115, which acts as the Proton donor. The residue at position 115 (Cys-115) is a 2-(S-cysteinyl)pyruvic acid O-phosphothioketal. UDP-N-acetyl-alpha-D-glucosamine is bound by residues 120–124, 160–163, Asp-305, and Ile-327; these read RPVDL and KVSV.

This sequence belongs to the EPSP synthase family. MurA subfamily.

The protein localises to the cytoplasm. It catalyses the reaction phosphoenolpyruvate + UDP-N-acetyl-alpha-D-glucosamine = UDP-N-acetyl-3-O-(1-carboxyvinyl)-alpha-D-glucosamine + phosphate. It functions in the pathway cell wall biogenesis; peptidoglycan biosynthesis. Functionally, cell wall formation. Adds enolpyruvyl to UDP-N-acetylglucosamine. In Baumannia cicadellinicola subsp. Homalodisca coagulata, this protein is UDP-N-acetylglucosamine 1-carboxyvinyltransferase.